Reading from the N-terminus, the 404-residue chain is Argininosuccinate synthase (404 aa).

Residues 12–20 (AYSGGLDTS) and A39 each bind ATP. Residues Y90 and S95 each coordinate L-citrulline. Residue G120 participates in ATP binding. Residues T122, N126, and D127 each coordinate L-aspartate. N126 serves as a coordination point for L-citrulline. Positions 130, 181, 190, 266, and 278 each coordinate L-citrulline.

The protein belongs to the argininosuccinate synthase family. Type 1 subfamily. As to quaternary structure, homotetramer.

It localises to the cytoplasm. It catalyses the reaction L-citrulline + L-aspartate + ATP = 2-(N(omega)-L-arginino)succinate + AMP + diphosphate + H(+). The protein operates within amino-acid biosynthesis; L-arginine biosynthesis; L-arginine from L-ornithine and carbamoyl phosphate: step 2/3. This is Argininosuccinate synthase from Rhodospirillum rubrum (strain ATCC 11170 / ATH 1.1.1 / DSM 467 / LMG 4362 / NCIMB 8255 / S1).